The following is a 210-amino-acid chain: Peptidyl-tRNA hydrolase (210 aa).

Residue Y30 participates in tRNA binding. Catalysis depends on H35, which acts as the Proton acceptor. TRNA-binding residues include Y81, N83, and N129.

This sequence belongs to the PTH family. Monomer.

It localises to the cytoplasm. It catalyses the reaction an N-acyl-L-alpha-aminoacyl-tRNA + H2O = an N-acyl-L-amino acid + a tRNA + H(+). In terms of biological role, hydrolyzes ribosome-free peptidyl-tRNAs (with 1 or more amino acids incorporated), which drop off the ribosome during protein synthesis, or as a result of ribosome stalling. Catalyzes the release of premature peptidyl moieties from peptidyl-tRNA molecules trapped in stalled 50S ribosomal subunits, and thus maintains levels of free tRNAs and 50S ribosomes. This Bordetella petrii (strain ATCC BAA-461 / DSM 12804 / CCUG 43448) protein is Peptidyl-tRNA hydrolase.